The chain runs to 132 residues: DNA-directed RNA polymerase subunit omega (132 aa).

It belongs to the RNA polymerase subunit omega family. The RNAP catalytic core consists of 2 alpha, 1 beta, 1 beta' and 1 omega subunit. When a sigma factor is associated with the core the holoenzyme is formed, which can initiate transcription.

The catalysed reaction is RNA(n) + a ribonucleoside 5'-triphosphate = RNA(n+1) + diphosphate. In terms of biological role, promotes RNA polymerase assembly. Latches the N- and C-terminal regions of the beta' subunit thereby facilitating its interaction with the beta and alpha subunits. The protein is DNA-directed RNA polymerase subunit omega of Bartonella quintana (strain Toulouse) (Rochalimaea quintana).